We begin with the raw amino-acid sequence, 278 residues long: MNILLATASFVLSLGFVKAEPTRHHDRYAYIERVVCDVNFPDLLCRRKSHAIAYRMFRLIPVRNPNYEISTDYVSHEFNTTRVRSESEKYLCSSYGPNGYVSGDVFILRNALNKLFDHHEIEELAYELFIRLVASFLDSCSYPKSFEHNLVRCRSEDEELCTSPLAAFIKLVSRRSTRDVVLIVLNDFSHYLKLEEGHGFSKDRKSNQCVKFTQLYFYYLSAAVNFIERKISAFTLIPVMDDRRIASVSAIMISSKFANTTGNYVINATSFMDNTIPF.

The signal sequence occupies residues 1–19; it reads MNILLATASFVLSLGFVKA. 3 N-linked (GlcNAc...) asparagine glycosylation sites follow: asparagine 79, asparagine 259, and asparagine 267.

Its subcellular location is the spore wall. The protein is Spore wall protein 30 (SWP30) of Nosema bombycis (strain CQ1 / CVCC 102059) (Microsporidian parasite).